Reading from the N-terminus, the 720-residue chain is DNA helicase II (720 aa).

Residues 8–286 (DSLNDKQREA…IRLEQNYRST (279 aa)) enclose the UvrD-like helicase ATP-binding domain. ATP is bound by residues 32-37 (GSGKTR) and Arg284. The region spanning 287–564 (SNILSAANAL…QLMTLHSAKG (278 aa)) is the UvrD-like helicase C-terminal domain.

This sequence belongs to the helicase family. UvrD subfamily.

The enzyme catalyses Couples ATP hydrolysis with the unwinding of duplex DNA by translocating in the 3'-5' direction.. The catalysed reaction is ATP + H2O = ADP + phosphate + H(+). Its function is as follows. A helicase with DNA-dependent ATPase activity. Unwinds DNA duplexes with 3'-5' polarity. Translocates on single-stranded DNA with 3'-5' polarity. Initiates unwinding more efficiently from a nicked substrate than double-stranded DNA. Involved in the post-incision events of nucleotide excision repair and methyl-directed mismatch repair, and probably also in repair of alkylated DNA. The polypeptide is DNA helicase II (Escherichia coli (strain K12)).